The sequence spans 65 residues: Large ribosomal subunit protein uL30 (65 aa).

This sequence belongs to the universal ribosomal protein uL30 family. Part of the 50S ribosomal subunit.

The chain is Large ribosomal subunit protein uL30 from Mesorhizobium japonicum (strain LMG 29417 / CECT 9101 / MAFF 303099) (Mesorhizobium loti (strain MAFF 303099)).